We begin with the raw amino-acid sequence, 77 residues long: Translational regulator CsrA (77 aa).

The disordered stretch occupies residues 58-77 (ANRRTAEETLDQASRLLSQK). Residues 68–77 (DQASRLLSQK) are compositionally biased toward polar residues.

The protein belongs to the CsrA/RsmA family. In terms of assembly, homodimer; the beta-strands of each monomer intercalate to form a hydrophobic core, while the alpha-helices form wings that extend away from the core.

The protein resides in the cytoplasm. A translational regulator that binds mRNA to regulate translation initiation and/or mRNA stability. Usually binds in the 5'-UTR at or near the Shine-Dalgarno sequence preventing ribosome-binding, thus repressing translation. Its main target seems to be the major flagellin gene, while its function is anatagonized by FliW. The chain is Translational regulator CsrA from Magnetococcus marinus (strain ATCC BAA-1437 / JCM 17883 / MC-1).